The sequence spans 804 residues: DEP domain-containing protein 1A (804 aa).

In terms of domain architecture, DEP spans 24–108 (FRVGMPLRKH…DNNQLFRFPA (85 aa)). Residues 282–322 (DYFLNLPEPLLTFEYYELFVNILVVCGYITVSDRTSGIHKI) enclose the Rho-GAP domain. Residue Ser513 is modified to Phosphoserine. The interval 592–647 (AINALQLCCLLLPPPNRRKLQLLMRMISRMSQNVDMPKLHEQIGTRSLMINTFSRC) is interaction with ZNF224. Residues 726-760 (EQKISTSQAAIAELLENIVRSKSLSLKEKRRKLKQ) are a coiled coil.

Can form dimers. Interacts with ZNF224.

The protein localises to the nucleus. In terms of biological role, may be involved in transcriptional regulation as a transcriptional corepressor. The DEPDC1A-ZNF224 complex may play a critical role in bladder carcinogenesis by repressing the transcription of the A20 gene, leading to transport of NF-KB protein into the nucleus, resulting in suppression of apoptosis of bladder cancer cells. This Mus musculus (Mouse) protein is DEP domain-containing protein 1A (Depdc1a).